Here is a 1319-residue protein sequence, read N- to C-terminus: DNA-directed RNA polymerase subunit beta' (1319 aa).

Zn(2+) is bound by residues Cys-59, Cys-61, Cys-74, and Cys-77. Mg(2+) is bound by residues Asp-449, Asp-451, and Asp-453. Positions 773, 846, 853, and 856 each coordinate Zn(2+).

This sequence belongs to the RNA polymerase beta' chain family. The RNAP catalytic core consists of 2 alpha, 1 beta, 1 beta' and 1 omega subunit. When a sigma factor is associated with the core the holoenzyme is formed, which can initiate transcription. The cofactor is Mg(2+). It depends on Zn(2+) as a cofactor.

The catalysed reaction is RNA(n) + a ribonucleoside 5'-triphosphate = RNA(n+1) + diphosphate. Functionally, DNA-dependent RNA polymerase catalyzes the transcription of DNA into RNA using the four ribonucleoside triphosphates as substrates. The polypeptide is DNA-directed RNA polymerase subunit beta' (Fusobacterium nucleatum subsp. nucleatum (strain ATCC 25586 / DSM 15643 / BCRC 10681 / CIP 101130 / JCM 8532 / KCTC 2640 / LMG 13131 / VPI 4355)).